The chain runs to 218 residues: Protein-methionine-sulfoxide reductase heme-binding subunit MsrQ (218 aa).

The next 5 helical transmembrane spans lie at 14 to 34 (LVHAAALAPIALLGWQFWQVW), 60 to 80 (FLLITLAITPLRQLTGQAVVI), 86 to 106 (LGLYAFFYASVHLAAYLTLDL), 121 to 141 (PYITVGFAAWLLLMPLAITST), and 155 to 175 (LHTLIYPIGLLAVLHFWWLVK).

It belongs to the MsrQ family. Heterodimer of a catalytic subunit (MsrP) and a heme-binding subunit (MsrQ). FMN is required as a cofactor. Requires heme b as cofactor.

It is found in the cell inner membrane. In terms of biological role, part of the MsrPQ system that repairs oxidized periplasmic proteins containing methionine sulfoxide residues (Met-O), using respiratory chain electrons. Thus protects these proteins from oxidative-stress damage caused by reactive species of oxygen and chlorine generated by the host defense mechanisms. MsrPQ is essential for the maintenance of envelope integrity under bleach stress, rescuing a wide series of structurally unrelated periplasmic proteins from methionine oxidation. MsrQ provides electrons for reduction to the reductase catalytic subunit MsrP, using the quinone pool of the respiratory chain. This is Protein-methionine-sulfoxide reductase heme-binding subunit MsrQ from Xanthomonas euvesicatoria pv. vesicatoria (strain 85-10) (Xanthomonas campestris pv. vesicatoria).